The chain runs to 162 residues: Lymphocyte antigen 86 (162 aa).

An N-terminal signal peptide occupies residues 1–20 (MKGFTATLFLWTLIFPSCSG). 3 cysteine pairs are disulfide-bonded: cysteine 33-cysteine 58, cysteine 45-cysteine 154, and cysteine 102-cysteine 112. An N-linked (GlcNAc...) asparagine glycan is attached at asparagine 96. A glycan (N-linked (GlcNAc...) asparagine) is linked at asparagine 156.

As to quaternary structure, M-shaped tetramer of two CD180-LY86 heterodimers. Highly expressed in B-cells, monocytes and tonsil.

It is found in the secreted. The protein resides in the extracellular space. In terms of biological role, may cooperate with CD180 and TLR4 to mediate the innate immune response to bacterial lipopolysaccharide (LPS) and cytokine production. Important for efficient CD180 cell surface expression. The polypeptide is Lymphocyte antigen 86 (LY86) (Homo sapiens (Human)).